The chain runs to 62 residues: Large ribosomal subunit protein bL33 (62 aa).

It belongs to the bacterial ribosomal protein bL33 family.

The polypeptide is Large ribosomal subunit protein bL33 (Trichodesmium erythraeum (strain IMS101)).